A 271-amino-acid chain; its full sequence is Formamidopyrimidine-DNA glycosylase (271 aa).

The active-site Schiff-base intermediate with DNA is proline 2. The Proton donor role is filled by glutamate 3. Residue lysine 58 is the Proton donor; for beta-elimination activity of the active site. Residues histidine 91, arginine 110, and arginine 152 each contribute to the DNA site. The FPG-type zinc-finger motif lies at 237-271 (RVYGRTGLACMACETPVKQIVQGNRSTYYCPACQR). Arginine 261 serves as the catalytic Proton donor; for delta-elimination activity.

This sequence belongs to the FPG family. Monomer. The cofactor is Zn(2+).

It carries out the reaction Hydrolysis of DNA containing ring-opened 7-methylguanine residues, releasing 2,6-diamino-4-hydroxy-5-(N-methyl)formamidopyrimidine.. It catalyses the reaction 2'-deoxyribonucleotide-(2'-deoxyribose 5'-phosphate)-2'-deoxyribonucleotide-DNA = a 3'-end 2'-deoxyribonucleotide-(2,3-dehydro-2,3-deoxyribose 5'-phosphate)-DNA + a 5'-end 5'-phospho-2'-deoxyribonucleoside-DNA + H(+). Its function is as follows. Involved in base excision repair of DNA damaged by oxidation or by mutagenic agents. Acts as a DNA glycosylase that recognizes and removes damaged bases. Has a preference for oxidized purines, such as 7,8-dihydro-8-oxoguanine (8-oxoG). Has AP (apurinic/apyrimidinic) lyase activity and introduces nicks in the DNA strand. Cleaves the DNA backbone by beta-delta elimination to generate a single-strand break at the site of the removed base with both 3'- and 5'-phosphates. The polypeptide is Formamidopyrimidine-DNA glycosylase (Thioalkalivibrio sulfidiphilus (strain HL-EbGR7)).